The primary structure comprises 362 residues: MWASCCNWFCLDGQPEETPPPQGARTQAYSNPGYSSFPSPTGSEPSCKACGVHFASTTRKQTCLDCKKNFCMTCSSQEGNGPRLCLLCLRFRATAFQREELMKMKVKDLRDYLSLHDISTEMCREKEELVFLVLGQQPVISEADRTRAPTLPQAFPEQQAFLTQPQSSTVPPTSPGLPSSPAQVTSVLAQDQETQQAIGHVSQDHEEPIFLESTARVPPEDETQSVDSEDSFVPGRRASLSDLTHLEDIEGLTVRQLKEILARNFVNYKGCCEKWELMERVTRLYKDQKGLQHLVSGNEDQNGGAVPSGLEENLCKICMDSPIDCVLLECGHMVTCTKCGKRMNECPICRQYVIRAVHVFRS.

The disordered stretch occupies residues 17–37 (ETPPPQGARTQAYSNPGYSSF). Residues 24 to 37 (ARTQAYSNPGYSSF) are compositionally biased toward polar residues. Residues 41–93 (TGSEPSCKACGVHFASTTRKQTCLDCKKNFCMTCSSQEGNGPRLCLLCLRFRA) form an FYVE-type zinc finger. The SAP 1 domain maps to 101–120 (LMKMKVKDLRDYLSLHDIST). A disordered region spans residues 162-183 (LTQPQSSTVPPTSPGLPSSPAQ). A phosphoserine mark is found at Ser-225, Ser-228, Ser-231, and Ser-239. Residues 249–263 (IEGLTVRQLKEILAR) enclose the SAP 2 domain. The RING-type zinc-finger motif lies at 315 to 350 (CKICMDSPIDCVLLECGHMVTCTKCGKRMNECPICR).

In terms of assembly, interacts with CASP8 and CASP10. Interacts with RIPK1 (via protein kinase domain); involved in RIPK1 ubiquitination. Interacts with PRR5L. Interacts (via RING-type zinc finger) with p53/TP53; involved in p53/TP53 ubiquitination. Interacts (via RING-type zinc finger) with MDM2; the interaction stabilizes MDM2. Post-translationally, autoubiquitinated. In terms of processing, palmitoylated. Undergoes caspase-mediated cleavage upon death-receptor activation, by TNFSF10 for instance. May be mediated by the caspases CASP8 and CASP10 in a negative feedback loop. Ubiquitous. Detected in cerebrum, cerebellum, midbrain, brain stem, hippocampus, striatum, liver, heart, lung, kidney, muscle, spleen and testis.

It localises to the cytoplasm. Its subcellular location is the cytosol. The protein resides in the cell membrane. It is found in the recycling endosome membrane. The catalysed reaction is S-ubiquitinyl-[E2 ubiquitin-conjugating enzyme]-L-cysteine + [acceptor protein]-L-lysine = [E2 ubiquitin-conjugating enzyme]-L-cysteine + N(6)-ubiquitinyl-[acceptor protein]-L-lysine.. It participates in protein modification; protein ubiquitination. In terms of biological role, E3 ubiquitin-protein ligase that regulates several biological processes through the ubiquitin-mediated proteasomal degradation of various target proteins. Mediates 'Lys-48'-linked polyubiquitination of PRR5L and its subsequent proteasomal degradation thereby indirectly regulating cell migration through the mTORC2 complex. Also ubiquitinates the caspases CASP8 and CASP10, promoting their proteasomal degradation, to negatively regulate apoptosis downstream of death domain receptors. Also negatively regulates the tumor necrosis factor-mediated signaling pathway through targeting of RIPK1 to ubiquitin-mediated proteasomal degradation. Negatively regulates p53/TP53 through its direct ubiquitination and targeting to proteasomal degradation. Indirectly, may also negatively regulate p53/TP53 through ubiquitination and degradation of SFN. May also play a role in endocytic recycling. The polypeptide is E3 ubiquitin-protein ligase rififylin (Rattus norvegicus (Rat)).